A 633-amino-acid polypeptide reads, in one-letter code: UvrABC system protein C (633 aa).

The 80-residue stretch at 21 to 100 folds into the GIY-YIG domain; the sequence is TDPGVYKFLD…IKELQPRYNV (80 aa). Positions 214-249 constitute a UVR domain; it reads QELMDLLKDEMQRQSDAHNFEEAARLRDQVKALKDY.

The protein belongs to the UvrC family. As to quaternary structure, interacts with UvrB in an incision complex.

Its subcellular location is the cytoplasm. In terms of biological role, the UvrABC repair system catalyzes the recognition and processing of DNA lesions. UvrC both incises the 5' and 3' sides of the lesion. The N-terminal half is responsible for the 3' incision and the C-terminal half is responsible for the 5' incision. The chain is UvrABC system protein C from Salinibacter ruber (strain DSM 13855 / M31).